Here is a 195-residue protein sequence, read N- to C-terminus: Glutathione S-transferase class-mu 26 kDa isozyme (195 aa).

One can recognise a GST N-terminal domain in the interval 1–83 (MAPKLGYWKI…YIADKHNMLG (83 aa)). Glutathione contacts are provided by residues 7–8 (YW), 41–45 (WRNEK), 54–55 (NL), and 67–68 (QS). Residues 85 to 195 (CPKERAEISM…TFGGGDAPPK (111 aa)) enclose the GST C-terminal domain. Residue tyrosine 111 coordinates substrate.

Belongs to the GST superfamily. Mu family. As to quaternary structure, homodimer.

The catalysed reaction is RX + glutathione = an S-substituted glutathione + a halide anion + H(+). Conjugation of reduced glutathione to a wide number of exogenous and endogenous hydrophobic electrophiles. Its function is as follows. GST isoenzymes appear to play a central role in the parasite detoxification system. Other functions are also suspected including a role in increasing the solubility of haematin in the parasite gut. This is Glutathione S-transferase class-mu 26 kDa isozyme from Schistosoma mansoni (Blood fluke).